The chain runs to 252 residues: MPKSKRAKVYNLTQVTKKNREQKEKLFENIRECIPNYQHCFVFSIDNMRNNYLKDVRKELNDCRIFFGKTKLTARALGTTPEDAQADGLDKLSKYLSGSVGLIFTNRDPSEIKDYFVNLTQVDFARAGSVATRTITIPSGPLYSTGGEVPAEHDVPVSHTLEPELRRLGMPTRMVKGKVCLGDEAGEGDDYVICKEGETLDSRQTRLLKLFSICLSEFRVKLLAYWSAASGEVTELEKPGEAGAEEMEEDDE.

Belongs to the universal ribosomal protein uL10 family. Associates with the pre-60S ribosomal particle.

The protein localises to the nucleus. Its subcellular location is the nucleolus. The protein resides in the cytoplasm. Component of the ribosome assembly machinery. Nuclear paralog of the ribosomal protein P0, it binds pre-60S subunits at an early stage of assembly in the nucleolus, and is replaced by P0 in cytoplasmic pre-60S subunits and mature 80S ribosomes. The protein is Ribosome assembly factor mrt4 of Neurospora crassa (strain ATCC 24698 / 74-OR23-1A / CBS 708.71 / DSM 1257 / FGSC 987).